We begin with the raw amino-acid sequence, 92 residues long: Cell division protein FtsB (92 aa).

Topologically, residues 1–3 are cytoplasmic; it reads MKW. Residues 4–21 form a helical membrane-spanning segment; that stretch reads VTVVLSFALVCCQYSLWF. Topologically, residues 22 to 92 are periplasmic; it reads GKGSIGRNSS…TFYRLIRHNR (71 aa). Residues 28–50 adopt a coiled-coil conformation; sequence RNSSLREQIAVQEEKNQTLALRN.

This sequence belongs to the FtsB family. In terms of assembly, part of a complex composed of FtsB, FtsL and FtsQ.

Its subcellular location is the cell inner membrane. Essential cell division protein. May link together the upstream cell division proteins, which are predominantly cytoplasmic, with the downstream cell division proteins, which are predominantly periplasmic. The protein is Cell division protein FtsB of Neisseria meningitidis serogroup C (strain 053442).